The chain runs to 496 residues: Costunolide synthase (496 aa).

The helical; Signal-anchor for type II membrane protein transmembrane segment at 4–24 (FTIFSLVVASLVFFACWALVA) threads the bilayer. Residues asparagine 26, asparagine 168, asparagine 280, and asparagine 412 are each glycosylated (N-linked (GlcNAc...) asparagine). Cysteine 434 is a heme binding site.

The protein belongs to the cytochrome P450 family. Requires heme as cofactor. Expressed in floral glandular trichomes.

The protein localises to the membrane. It carries out the reaction germacra-1(10),4,11(13)-trien-12-oate + reduced [NADPH--hemoprotein reductase] + O2 = (+)-costunolide + oxidized [NADPH--hemoprotein reductase] + 2 H2O. It functions in the pathway secondary metabolite biosynthesis; terpenoid biosynthesis. In terms of biological role, involved in the biosynthesis of germacrene-derived sesquiterpene lactones. Component of the parthenolide biosynthetic pathway; parthenolide and conjugates are promising anti-cancer drugs highly active against colon cancer cells. Hydroxylates germacrene A acid to 6-alpha-hydroxy-germacrene A acid, a precursor of sesquiterpene lactones that spontaneously undergoes a lactonization which yields costunolide. The chain is Costunolide synthase from Tanacetum parthenium (Feverfew).